The following is an 870-amino-acid chain: DNA mismatch repair protein MutS (870 aa).

622-629 (GPNMGGKS) serves as a coordination point for ATP.

Belongs to the DNA mismatch repair MutS family.

Its function is as follows. This protein is involved in the repair of mismatches in DNA. It is possible that it carries out the mismatch recognition step. This protein has a weak ATPase activity. This chain is DNA mismatch repair protein MutS, found in Methylibium petroleiphilum (strain ATCC BAA-1232 / LMG 22953 / PM1).